The following is a 288-amino-acid chain: MMRCMQSPEVHPAAAGDAEPPTHSTFAVSRWRRGELMLSPDEVAEEVPVALVYNGISHAVMLATPADLEDFALGFSLSEGIVTRASDVYDIEIDTREHGIAVQLEIASEAFMRLKDRRRSLAGRTGCGLCGTESLEQVMRLPAPVRSDASFHTDVIQAAFVQLQLRQELQQHTGATHAAAWLRADGHVSLVREDVGRHNALDKLAGALASSGEDISSGAVLVTSRASYEMVLKTAAIGAGVLAAVSAPTALAVRLAEQASITLAGFVRAGAHVVYAHPQRLQHEASLA.

Residues 1-23 (MMRCMQSPEVHPAAAGDAEPPTH) form a disordered region. The active-site Cysteine persulfide intermediate is Cys127.

This sequence belongs to the FdhD family.

It localises to the cytoplasm. Required for formate dehydrogenase (FDH) activity. Acts as a sulfur carrier protein that transfers sulfur from IscS to the molybdenum cofactor prior to its insertion into FDH. The polypeptide is Sulfur carrier protein FdhD (Cupriavidus necator (strain ATCC 17699 / DSM 428 / KCTC 22496 / NCIMB 10442 / H16 / Stanier 337) (Ralstonia eutropha)).